The sequence spans 664 residues: PAN2-PAN3 deadenylation complex subunit PAN3 (664 aa).

Disordered stretches follow at residues 1–27 (MATT…GREN) and 54–134 (DPHK…PGTM). The segment at 27–56 (NAKDTLCRNVTIYGRCRYEDKGCAFNHDPH) adopts a C3H1-type zinc-finger fold. Residues 74-96 (DSPSFTPSILSSNGSSPTSQSAT) are compositionally biased toward polar residues. Residues 115–131 (PRSISSRSNSSTPTTRP) are compositionally biased toward low complexity. Residues 265–525 (QTLPNTQLPA…NIDIFITGIS (261 aa)) are pseudokinase domain. ATP is bound by residues Arg-317, 366–373 (DYHPLSKT), and 425–426 (SK). Positions 526–564 (STLMSTFDSALHLDDQLTSDLSRELENGRLVRLMTKLNF) form a coiled coil. The tract at residues 565–664 (VNERPEYEHD…LKPSASRRLH (100 aa)) is knob domain.

Belongs to the protein kinase superfamily. PAN3 family. As to quaternary structure, homodimer. Forms a heterotrimer with a catalytic subunit pan2 to form the poly(A)-nuclease (PAN) deadenylation complex. Interacts (via PAM-2 motif) with poly(A)-binding protein pab1 (via PABC domain), conferring substrate specificity of the enzyme complex.

It is found in the cytoplasm. Functionally, regulatory subunit of the poly(A)-nuclease (PAN) deadenylation complex, one of two cytoplasmic mRNA deadenylases involved in mRNA turnover. PAN specifically shortens poly(A) tails of RNA and the activity is stimulated by poly(A)-binding protein pab1. PAN deadenylation is followed by rapid degradation of the shortened mRNA tails by the CCR4-NOT complex. Deadenylated mRNAs are then degraded by two alternative mechanisms, namely exosome-mediated 3'-5' exonucleolytic degradation, or deadenylation-dependent mRNA decaping and subsequent 5'-3' exonucleolytic degradation by xrn1. May also be involved in post-transcriptional maturation of mRNA poly(A) tails. pan3 acts as a positive regulator for PAN activity, recruiting the catalytic subunit pan2 to mRNA via its interaction with RNA and with pab1. The protein is PAN2-PAN3 deadenylation complex subunit PAN3 of Aspergillus niger (strain ATCC MYA-4892 / CBS 513.88 / FGSC A1513).